The sequence spans 311 residues: Malate dehydrogenase (311 aa).

NAD(+) contacts are provided by residues G7–G13 and D34. The substrate site is built by R81 and R87. Residues N94 and I117 to N119 each bind NAD(+). N119 and R153 together coordinate substrate. The active-site Proton acceptor is H177. M227 is a binding site for NAD(+).

This sequence belongs to the LDH/MDH superfamily. MDH type 1 family. In terms of assembly, homodimer.

The catalysed reaction is (S)-malate + NAD(+) = oxaloacetate + NADH + H(+). Its function is as follows. Catalyzes the reversible oxidation of malate to oxaloacetate. The polypeptide is Malate dehydrogenase (Shewanella putrefaciens (strain CN-32 / ATCC BAA-453)).